The chain runs to 177 residues: Putative fimbrin-like protein FimI (177 aa).

An N-terminal signal peptide occupies residues 1-19; the sequence is MIRKGAALVGLVLMSPVIA. An intrachain disulfide couples C40 to C81.

Belongs to the fimbrial protein family.

Its subcellular location is the fimbrium. This chain is Putative fimbrin-like protein FimI (fimI), found in Salmonella typhi.